The sequence spans 380 residues: Cytochrome b (380 aa).

A run of 4 helical transmembrane segments spans residues 33–53 (FGSL…FLAM), 77–98 (WLIR…YLHI), 113–133 (WNVG…GYVL), and 178–198 (FFAF…LHLL). Residues H83 and H97 each coordinate heme b. Heme b is bound by residues H182 and H196. H201 is a binding site for a ubiquinone. The next 4 helical transmembrane spans lie at 226–246 (YKDL…ALFS), 288–308 (LGGV…PFLH), 320–340 (ASQF…WIGG), and 347–367 (FIII…VLFP).

It belongs to the cytochrome b family. As to quaternary structure, the cytochrome bc1 complex contains 3 respiratory subunits (MT-CYB, CYC1 and UQCRFS1), 2 core proteins (UQCRC1 and UQCRC2) and probably 6 low-molecular weight proteins. Heme b serves as cofactor.

Its subcellular location is the mitochondrion inner membrane. Functionally, component of the ubiquinol-cytochrome c reductase complex (complex III or cytochrome b-c1 complex) that is part of the mitochondrial respiratory chain. The b-c1 complex mediates electron transfer from ubiquinol to cytochrome c. Contributes to the generation of a proton gradient across the mitochondrial membrane that is then used for ATP synthesis. The polypeptide is Cytochrome b (mt-cyb) (Scomber scombrus (Atlantic mackerel)).